The sequence spans 696 residues: Polyribonucleotide nucleotidyltransferase (696 aa).

2 residues coordinate Mg(2+): Asp-486 and Asp-492. The 60-residue stretch at 553-612 (PRITQKQIPKDRIGELIGPGGKMIRAIIEQSGSEISVDDSGKVTIASPSEESKEKAIAMI) folds into the KH domain. The S1 motif domain occupies 622-690 (GKIYDGVIKR…KMGKIDLSRK (69 aa)).

It belongs to the polyribonucleotide nucleotidyltransferase family. It depends on Mg(2+) as a cofactor.

It localises to the cytoplasm. It carries out the reaction RNA(n+1) + phosphate = RNA(n) + a ribonucleoside 5'-diphosphate. Functionally, involved in mRNA degradation. Catalyzes the phosphorolysis of single-stranded polyribonucleotides processively in the 3'- to 5'-direction. The protein is Polyribonucleotide nucleotidyltransferase of Leptospira biflexa serovar Patoc (strain Patoc 1 / ATCC 23582 / Paris).